The sequence spans 86 residues: Phosphocarrier protein HPr (86 aa).

The HPr domain occupies 1–86 (MVKKEAIIKA…LAELIESFKE (86 aa)). Histidine 15 acts as the Pros-phosphohistidine intermediate in catalysis.

It belongs to the HPr family.

The protein resides in the cytoplasm. Functionally, general (non sugar-specific) component of the phosphoenolpyruvate-dependent sugar phosphotransferase system (sugar PTS). This major carbohydrate active-transport system catalyzes the phosphorylation of incoming sugar substrates concomitantly with their translocation across the cell membrane. The phosphoryl group from phosphoenolpyruvate (PEP) is transferred to the phosphoryl carrier protein HPr by enzyme I. Phospho-HPr then transfers it to the PTS EIIA domain. The polypeptide is Phosphocarrier protein HPr (ptsH) (Borreliella burgdorferi (strain ATCC 35210 / DSM 4680 / CIP 102532 / B31) (Borrelia burgdorferi)).